A 638-amino-acid chain; its full sequence is Neuroendocrine convertase 2 (638 aa).

A signal peptide spans 1 to 25; it reads MKGGCVSQWKAAAGFLFCVMVFASA. Positions 26–109 are excised as a propeptide; it reads ERPVFTNHFL…QQEGFDRKKR (84 aa). The Peptidase S8 domain maps to 129–453; it reads QWYLINTGQA…YGVLDAGAMV (325 aa). Catalysis depends on charge relay system residues D167 and H208. 2 disulfides stabilise this stretch: C225-C376 and C317-C347. N375 is a glycosylation site (N-linked (GlcNAc...) asparagine). S384 (charge relay system) is an active-site residue. One can recognise a P/Homo B domain in the interval 461-597; sequence TVPERFHCVG…TLMLHGTQSA (137 aa). A disulfide bridge links C468 with C494. N-linked (GlcNAc...) asparagine glycosylation is found at N514 and N524.

The protein belongs to the peptidase S8 family. Furin subfamily.

It localises to the cytoplasmic vesicle. The protein resides in the secretory vesicle. The protein localises to the secreted. The catalysed reaction is Release of protein hormones and neuropeptides from their precursors, generally by hydrolysis of -Lys-Arg-|- bonds.. In terms of biological role, serine endopeptidase which is involved in the processing of hormone and other protein precursors at sites comprised of pairs of basic amino acid residues. Responsible for the release of glucagon from proglucagon in pancreatic A cells. This Homo sapiens (Human) protein is Neuroendocrine convertase 2 (PCSK2).